A 380-amino-acid polypeptide reads, in one-letter code: Geranylgeranyl pyrophosphate synthase cle6 (380 aa).

Over residues 1-19 the composition is skewed to low complexity; sequence MHSVRTSTTSTSSMVSSTM. The segment at 1–55 is disordered; it reads MHSVRTSTTSTSSMVSSTMHPFDAFNAPQPYQQHHPPRWNIHNPHFSQTNGHSIQ. Over residues 45–55 the composition is skewed to polar residues; that stretch reads HFSQTNGHSIQ. Isopentenyl diphosphate is bound by residues Lys-102, Arg-105, and His-134. Residues Asp-141 and Asp-145 each coordinate Mg(2+). A dimethylallyl diphosphate-binding site is contributed by Arg-150. Arg-151 is an isopentenyl diphosphate binding site. The dimethylallyl diphosphate site is built by Lys-229, Thr-230, and Gln-263. Residue Asp-266 participates in Mg(2+) binding. Asn-270, Lys-280, and Lys-290 together coordinate dimethylallyl diphosphate.

This sequence belongs to the FPP/GGPP synthase family. The cofactor is Mg(2+).

The enzyme catalyses isopentenyl diphosphate + dimethylallyl diphosphate = (2E)-geranyl diphosphate + diphosphate. It carries out the reaction isopentenyl diphosphate + (2E)-geranyl diphosphate = (2E,6E)-farnesyl diphosphate + diphosphate. The catalysed reaction is isopentenyl diphosphate + (2E,6E)-farnesyl diphosphate = (2E,6E,10E)-geranylgeranyl diphosphate + diphosphate. The protein operates within secondary metabolite biosynthesis; terpenoid biosynthesis. Its function is as follows. Geranylgeranyl pyrophosphate synthase; part of the cluster A that mediates the biosynthesis of chevalone E and its oxidized derivatives that possess a unique five-membered lactone ring and can synergistically enhance the cytotoxicity of doxorubicin (DOX) in breast cancer cells. Within the pathway, cle6 takes part to the biosynthesis of the molecular scaffold by providing geranylgeranyl pyrophosphate (GGPP) to the prenyltransferase cle5 for C-3 geranylgeranylation of triacetic acid lactone. The molecular scaffold is commonly biosynthesized by a series of enzymes including the non-reducing polyketide synthase (NR-PKS) cle1 that produces the alpha-pyrone triacetic acid lactone (TAL); The membrane-bound prenyltransferase cle5 that accepts TAL as its substrate to perform a C-3 geranylgeranylation reaction, in which the pathway-dedicated GGPS cle6 is required to provide GGPP, the other substrate of cle5; the FAD-dependent monooxygenase Cle3 that forms an (S)-epoxide ring at the terminal olefin of the geranylgeranyl group; and the terpene cyclase Cle7 that catalyzes the cyclization of the prenyl group that yields the pentacyclic pathway intermediate chevalone E. Chevalone E can derivatize into seven new oxidized analogs by the cytochrome P450 monooxygenases cle2 (acting at C-20) and cle4 (acting at C-11 and C-12). The protein is Geranylgeranyl pyrophosphate synthase cle6 of Aspergillus versicolor.